The primary structure comprises 229 residues: Heptaprenylglyceryl phosphate synthase (229 aa).

Residue Lys12 coordinates sn-glycerol 1-phosphate. Positions 14 and 40 each coordinate Mg(2+). Residues 159 to 164 (YLEYSG), Gly189, and 209 to 210 (GN) contribute to the sn-glycerol 1-phosphate site.

Belongs to the GGGP/HepGP synthase family. Group I subfamily. In terms of assembly, homodimer. Requires Mg(2+) as cofactor.

It catalyses the reaction sn-glycerol 1-phosphate + all-trans-heptaprenyl diphosphate = 3-heptaprenyl-sn-glycero-1-phosphate + diphosphate. The protein operates within membrane lipid metabolism; glycerophospholipid metabolism. In terms of biological role, prenyltransferase that catalyzes in vivo the transfer of the heptaprenyl moiety of heptaprenyl pyrophosphate (HepPP; 35 carbon atoms) to the C3 hydroxyl of sn-glycerol-1-phosphate (G1P), producing heptaprenylglyceryl phosphate (HepGP). This reaction is an ether-bond-formation step in the biosynthesis of archaea-type G1P-based membrane lipids found in Bacillales. This is Heptaprenylglyceryl phosphate synthase from Bacillus cereus (strain ATCC 14579 / DSM 31 / CCUG 7414 / JCM 2152 / NBRC 15305 / NCIMB 9373 / NCTC 2599 / NRRL B-3711).